The sequence spans 246 residues: Polyhedrin (246 aa).

It belongs to the polyhedrin family.

In terms of biological role, major component of the virus occlusion bodies, which are large proteinaceous structures (polyhedra), that protect the virus from the outside environment for extended periods until they are ingested by insect larvae. The polypeptide is Polyhedrin (PH) (Lepidoptera (butterflies and moths)).